The sequence spans 609 residues: Glutamine--fructose-6-phosphate aminotransferase [isomerizing] (609 aa).

Cys-2 (nucleophile; for GATase activity) is an active-site residue. Residues 2–219 (CGIVAAVTQR…EGDIAIVARK (218 aa)) enclose the Glutamine amidotransferase type-2 domain. SIS domains follow at residues 288-428 (ENNI…SKKE) and 460-599 (MANT…IDQP). Residue Lys-604 is the For Fru-6P isomerization activity of the active site.

Homodimer.

The protein resides in the cytoplasm. It catalyses the reaction D-fructose 6-phosphate + L-glutamine = D-glucosamine 6-phosphate + L-glutamate. In terms of biological role, catalyzes the first step in hexosamine metabolism, converting fructose-6P into glucosamine-6P using glutamine as a nitrogen source. This is Glutamine--fructose-6-phosphate aminotransferase [isomerizing] from Buchnera aphidicola subsp. Acyrthosiphon pisum (strain APS) (Acyrthosiphon pisum symbiotic bacterium).